The chain runs to 793 residues: Putative glutamate--cysteine ligase 2-3 (793 aa).

The interval 1-407 (MLASDPRKVG…RFWDRGDTAD (407 aa)) is carboxylate-amine ligase. The interval 367 to 390 (TEHLPDVEVPPPREPGPKSTGAGR) is disordered. Residues 408–793 (MTWTESTELD…ALTRLEDQSG (386 aa)) form a peptidase M20 region.

The protein in the C-terminal section; belongs to the glutamate--cysteine ligase type 2 family. YbdK subfamily.

The catalysed reaction is L-cysteine + L-glutamate + ATP = gamma-L-glutamyl-L-cysteine + ADP + phosphate + H(+). Its function is as follows. ATP-dependent carboxylate-amine ligase which exhibits weak glutamate--cysteine ligase activity. This is Putative glutamate--cysteine ligase 2-3 from Rhodococcus jostii (strain RHA1).